A 261-amino-acid chain; its full sequence is DNA repair protein RecO (261 aa).

It belongs to the RecO family.

Involved in DNA repair and RecF pathway recombination. The chain is DNA repair protein RecO from Pelodictyon phaeoclathratiforme (strain DSM 5477 / BU-1).